The following is a 179-amino-acid chain: Large ribosomal subunit protein uL5 (179 aa).

It belongs to the universal ribosomal protein uL5 family. As to quaternary structure, part of the 50S ribosomal subunit; part of the 5S rRNA/L5/L18/L25 subcomplex. Contacts the 5S rRNA and the P site tRNA. Forms a bridge to the 30S subunit in the 70S ribosome.

This is one of the proteins that bind and probably mediate the attachment of the 5S RNA into the large ribosomal subunit, where it forms part of the central protuberance. In the 70S ribosome it contacts protein S13 of the 30S subunit (bridge B1b), connecting the 2 subunits; this bridge is implicated in subunit movement. Contacts the P site tRNA; the 5S rRNA and some of its associated proteins might help stabilize positioning of ribosome-bound tRNAs. This is Large ribosomal subunit protein uL5 from Prochlorococcus marinus (strain MIT 9211).